Consider the following 303-residue polypeptide: D-alanine--D-alanine ligase (303 aa).

In terms of domain architecture, ATP-grasp spans 104–300; the sequence is KLLWNAVGLP…FEKLVERVLE (197 aa). 132–187 contacts ATP; the sequence is IAKLSLPVFVKPSSEGSSVGVFKVKTKEELLPAITAALEFDTIVLVEEFLTGAEYS. Mg(2+)-binding residues include D254, E267, and N269.

It belongs to the D-alanine--D-alanine ligase family. Requires Mg(2+) as cofactor. Mn(2+) serves as cofactor.

The protein resides in the cytoplasm. The enzyme catalyses 2 D-alanine + ATP = D-alanyl-D-alanine + ADP + phosphate + H(+). The protein operates within cell wall biogenesis; peptidoglycan biosynthesis. In terms of biological role, cell wall formation. The polypeptide is D-alanine--D-alanine ligase (Haemophilus ducreyi (strain 35000HP / ATCC 700724)).